The sequence spans 443 residues: Methylenetetrahydrofolate--tRNA-(uracil-5-)-methyltransferase TrmFO (443 aa).

An FAD-binding site is contributed by 8–13 (GAGLAG).

The protein belongs to the MnmG family. TrmFO subfamily. The cofactor is FAD.

It localises to the cytoplasm. The enzyme catalyses uridine(54) in tRNA + (6R)-5,10-methylene-5,6,7,8-tetrahydrofolate + NADH + H(+) = 5-methyluridine(54) in tRNA + (6S)-5,6,7,8-tetrahydrofolate + NAD(+). It catalyses the reaction uridine(54) in tRNA + (6R)-5,10-methylene-5,6,7,8-tetrahydrofolate + NADPH + H(+) = 5-methyluridine(54) in tRNA + (6S)-5,6,7,8-tetrahydrofolate + NADP(+). Functionally, catalyzes the folate-dependent formation of 5-methyl-uridine at position 54 (M-5-U54) in all tRNAs. The polypeptide is Methylenetetrahydrofolate--tRNA-(uracil-5-)-methyltransferase TrmFO (Thermus thermophilus (strain ATCC BAA-163 / DSM 7039 / HB27)).